Here is a 138-residue protein sequence, read N- to C-terminus: Ribulose bisphosphate carboxylase small subunit (138 aa).

This sequence belongs to the RuBisCO small chain family. As to quaternary structure, heterohexadecamer of 8 large and 8 small subunits.

The protein localises to the plastid. Its subcellular location is the chloroplast. Functionally, ruBisCO catalyzes two reactions: the carboxylation of D-ribulose 1,5-bisphosphate, the primary event in carbon dioxide fixation, as well as the oxidative fragmentation of the pentose substrate in the photorespiration process. Both reactions occur simultaneously and in competition at the same active site. Although the small subunit is not catalytic it is essential for maximal activity. The polypeptide is Ribulose bisphosphate carboxylase small subunit (Pyropia katadae (Red alga)).